A 447-amino-acid chain; its full sequence is Gastrin/cholecystokinin type B receptor (447 aa).

The Extracellular portion of the chain corresponds to Met1–Arg57. Asn7, Asn30, and Asn36 each carry an N-linked (GlcNAc...) asparagine glycan. The chain crosses the membrane as a helical span at residues Ile58–Leu79. Residues Gly80 to Thr87 lie on the Cytoplasmic side of the membrane. Residues Val88–Pro109 form a helical membrane-spanning segment. Over Phe110–Ser131 the chain is Extracellular. Cysteines 127 and 205 form a disulfide. A helical transmembrane segment spans residues Tyr132 to Leu150. The Cytoplasmic segment spans residues Glu151–His170. Residues Ala171–Tyr189 traverse the membrane as a helical segment. Topologically, residues Pro190–Ser219 are extracellular. Residues Val220–Ser242 form a helical membrane-spanning segment. At Arg243–Arg333 the chain is on the cytoplasmic side. The tract at residues Asp258 to Ala285 is disordered. The helical transmembrane segment at Met334–Trp355 threads the bilayer. The Extracellular segment spans residues Arg356 to Ser373. A helical transmembrane segment spans residues Phe374–His394. At Arg395–Gly447 the chain is on the cytoplasmic side. Residue Cys408 is the site of S-palmitoyl cysteine attachment.

This sequence belongs to the G-protein coupled receptor 1 family. In terms of tissue distribution, isoform 1 is expressed in brain, pancreas, stomach, the colon cancer cell line LoVo and the T-lymphoblastoma Jurkat, but not in heart, placenta, liver, lung, skeletal muscle, kidney or the stomach cancer cell line AGS. Expressed at high levels in the small cell lung cancer cell line NCI-H510, at lower levels in NCI-H345, NCI-H69 and GLC-28 cell lines, not expressed in GLC-19 cell line. Within the stomach, expressed at high levels in the mucosa of the gastric fundus and at low levels in the antrum and duodenum. Isoform 2 is present in pancreatic cancer cells and colorectal cancer cells, but not in normal pancreas or colonic mucosa. Isoform 3 is expressed in brain, pancreas, stomach, the stomach cancer cell line AGS and the colon cancer cell line LoVo.

The protein localises to the cell membrane. In terms of biological role, receptor for gastrin and cholecystokinin. The CCK-B receptors occur throughout the central nervous system where they modulate anxiety, analgesia, arousal, and neuroleptic activity. This receptor mediates its action by association with G proteins that activate a phosphatidylinositol-calcium second messenger system. Functionally, isoform 2 is constitutively activated and may regulate cancer cell proliferation via a gastrin-independent mechanism. This is Gastrin/cholecystokinin type B receptor from Homo sapiens (Human).